A 274-amino-acid chain; its full sequence is Bis(5'-nucleosyl)-tetraphosphatase, symmetrical (274 aa).

Belongs to the Ap4A hydrolase family.

The catalysed reaction is P(1),P(4)-bis(5'-adenosyl) tetraphosphate + H2O = 2 ADP + 2 H(+). Hydrolyzes diadenosine 5',5'''-P1,P4-tetraphosphate to yield ADP. In Shewanella sediminis (strain HAW-EB3), this protein is Bis(5'-nucleosyl)-tetraphosphatase, symmetrical.